Reading from the N-terminus, the 117-residue chain is Large ribosomal subunit protein bL20 (117 aa).

It belongs to the bacterial ribosomal protein bL20 family.

Its function is as follows. Binds directly to 23S ribosomal RNA and is necessary for the in vitro assembly process of the 50S ribosomal subunit. It is not involved in the protein synthesizing functions of that subunit. In Synechocystis sp. (strain ATCC 27184 / PCC 6803 / Kazusa), this protein is Large ribosomal subunit protein bL20 (rplT).